Here is a 570-residue protein sequence, read N- to C-terminus: Zinc finger protein 76 (570 aa).

A Glycyl lysine isopeptide (Lys-Gly) (interchain with G-Cter in SUMO2) cross-link involves residue Lys24. A run of 3 repeats spans residues 34–45 (IQLEDGTTAYIH), 62–73 (VQLEDGSMAYIH), and 88–99 (VQLEDGSTAYIH). The 3 X 12 AA approximate repeats stretch occupies residues 34–99 (IQLEDGTTAY…LEDGSTAYIH (66 aa)). 7 consecutive C2H2-type zinc fingers follow at residues 165–189 (FRCGYKGCGRLYTTAHHLKVHERAH), 195–219 (YRCDFPSCGKAFATGYGLKSHVRTH), 225–249 (YKCPEELCSKAFKTSGDLQKHVRTH), 255–279 (FQCPFEGCGRSFTTSNIRKVHVRTH), 285–309 (YTCPEPHCGRGFTSATNYKNHVRIH), 315–339 (YVCTVPGCGKRFTEYSSLYKHHVVH), and 345–368 (YTCSTCGKTYRQTSTLAMHKRSAH). A disordered region spans residues 365 to 401 (RSAHGELEATEESEQALYEQQQLEAASAAEESPPPKR). Residues 379 to 395 (QALYEQQQLEAASAAEE) are compositionally biased toward low complexity.

The protein belongs to the krueppel C2H2-type zinc-finger protein family. Testis.

It is found in the nucleus. Its function is as follows. May be involved in transcriptional regulation. This Homo sapiens (Human) protein is Zinc finger protein 76 (ZNF76).